The sequence spans 389 residues: Chalcone synthase 6 (389 aa).

Cys-164 is an active-site residue.

The protein belongs to the thiolase-like superfamily. Chalcone/stilbene synthases family.

It catalyses the reaction (E)-4-coumaroyl-CoA + 3 malonyl-CoA + 3 H(+) = 2',4,4',6'-tetrahydroxychalcone + 3 CO2 + 4 CoA. It functions in the pathway secondary metabolite biosynthesis; flavonoid biosynthesis. In terms of biological role, the primary product of this enzyme is 4,2',4',6'-tetrahydroxychalcone (also termed naringenin-chalcone or chalcone) which can under specific conditions spontaneously isomerize into naringenin. This is Chalcone synthase 6 (CHS6) from Pisum sativum (Garden pea).